The following is a 201-amino-acid chain: Adenylyl-sulfate kinase (201 aa).

Residues 1 to 23 (MALHDENVVWHSHPVTPQQREQH) form a disordered region. 35-42 (GLSGSGKS) lines the ATP pocket. The active-site Phosphoserine intermediate is Ser-109.

The protein belongs to the APS kinase family.

The catalysed reaction is adenosine 5'-phosphosulfate + ATP = 3'-phosphoadenylyl sulfate + ADP + H(+). Its pathway is sulfur metabolism; hydrogen sulfide biosynthesis; sulfite from sulfate: step 2/3. Functionally, catalyzes the synthesis of activated sulfate. The protein is Adenylyl-sulfate kinase of Escherichia coli O127:H6 (strain E2348/69 / EPEC).